The chain runs to 208 residues: Thymidylate kinase (208 aa).

7–14 contributes to the ATP binding site; it reads GIDGAGKT.

Belongs to the thymidylate kinase family.

The enzyme catalyses dTMP + ATP = dTDP + ADP. Functionally, phosphorylation of dTMP to form dTDP in both de novo and salvage pathways of dTTP synthesis. The sequence is that of Thymidylate kinase (tmk) from Xylella fastidiosa (strain 9a5c).